A 277-amino-acid chain; its full sequence is Undecaprenyl-diphosphatase (277 aa).

A run of 7 helical transmembrane segments spans residues 3 to 23 (IALL…EFLP), 44 to 64 (AKVF…LVYW), 82 to 102 (QFAL…LLFG), 109 to 129 (LFTP…ILWA), 189 to 209 (TDFS…YSLF), 218 to 238 (ADAP…WLCI), and 253 to 273 (FAWY…SGVV).

Belongs to the UppP family.

It is found in the cell inner membrane. It catalyses the reaction di-trans,octa-cis-undecaprenyl diphosphate + H2O = di-trans,octa-cis-undecaprenyl phosphate + phosphate + H(+). In terms of biological role, catalyzes the dephosphorylation of undecaprenyl diphosphate (UPP). Confers resistance to bacitracin. The chain is Undecaprenyl-diphosphatase from Polaromonas naphthalenivorans (strain CJ2).